A 404-amino-acid chain; its full sequence is CCA-adding enzyme (404 aa).

Residues Gly27 and Arg30 each coordinate ATP. CTP contacts are provided by Gly27 and Arg30. Residues Asp40 and Asp42 each contribute to the Mg(2+) site. 5 residues coordinate ATP: Arg111, Asp154, Arg157, Arg160, and Arg163. CTP-binding residues include Arg111, Asp154, Arg157, Arg160, and Arg163.

The protein belongs to the tRNA nucleotidyltransferase/poly(A) polymerase family. Bacterial CCA-adding enzyme type 3 subfamily. In terms of assembly, homodimer. Requires Mg(2+) as cofactor.

The catalysed reaction is a tRNA precursor + 2 CTP + ATP = a tRNA with a 3' CCA end + 3 diphosphate. It catalyses the reaction a tRNA with a 3' CCA end + 2 CTP + ATP = a tRNA with a 3' CCACCA end + 3 diphosphate. Functionally, catalyzes the addition and repair of the essential 3'-terminal CCA sequence in tRNAs without using a nucleic acid template. Adds these three nucleotides in the order of C, C, and A to the tRNA nucleotide-73, using CTP and ATP as substrates and producing inorganic pyrophosphate. tRNA 3'-terminal CCA addition is required both for tRNA processing and repair. Also involved in tRNA surveillance by mediating tandem CCA addition to generate a CCACCA at the 3' terminus of unstable tRNAs. While stable tRNAs receive only 3'-terminal CCA, unstable tRNAs are marked with CCACCA and rapidly degraded. The sequence is that of CCA-adding enzyme from Geobacillus sp. (strain WCH70).